Consider the following 280-residue polypeptide: tRNA pseudouridine synthase A (280 aa).

D55 (nucleophile) is an active-site residue. Y110 is a substrate binding site.

Belongs to the tRNA pseudouridine synthase TruA family.

The enzyme catalyses uridine(38/39/40) in tRNA = pseudouridine(38/39/40) in tRNA. Formation of pseudouridine at positions 38, 39 and 40 in the anticodon stem and loop of transfer RNAs. The chain is tRNA pseudouridine synthase A from Methanosphaerula palustris (strain ATCC BAA-1556 / DSM 19958 / E1-9c).